The primary structure comprises 690 residues: Serotransferrin (690 aa).

The signal sequence occupies residues M1–L17. 2 Transferrin-like domains span residues V24–K329 and I340–K670. A disulfide bridge links C27 with C49. The Fe(3+) site is built by D73 and Y103. 3 disulfide bridges follow: C126–C206, C171–C185, and C234–C248. 4 residues coordinate hydrogencarbonate: T128, K132, A134, and G135. Y200 serves as a coordination point for Fe(3+). H256 lines the Fe(3+) pocket. 2 cysteine pairs are disulfide-bonded: C343–C379 and C353–C370. Fe(3+) is bound by residues D394 and Y429. Intrachain disulfides connect C404–C682, C419–C643, C452–C530, C476–C671, C486–C499, C496–C513, and C570–C584. Hydrogencarbonate is bound by residues T454, R458, A460, and G461. A Fe(3+)-binding site is contributed by Y524. H592 lines the Fe(3+) pocket.

The protein belongs to the transferrin family. In terms of assembly, monomer.

Its subcellular location is the secreted. Its function is as follows. Transferrins are iron binding transport proteins which can bind two Fe(3+) ions in association with the binding of an anion, usually bicarbonate. The polypeptide is Serotransferrin (tf) (Oryzias latipes (Japanese rice fish)).